The sequence spans 185 residues: Ribosome-recycling factor (185 aa).

The protein belongs to the RRF family.

It localises to the cytoplasm. Its function is as follows. Responsible for the release of ribosomes from messenger RNA at the termination of protein biosynthesis. May increase the efficiency of translation by recycling ribosomes from one round of translation to another. This is Ribosome-recycling factor from Myxococcus xanthus (strain DK1622).